The following is a 221-amino-acid chain: Protein-L-isoaspartate O-methyltransferase (221 aa).

The active site involves Ser57.

The protein belongs to the methyltransferase superfamily. L-isoaspartyl/D-aspartyl protein methyltransferase family.

It localises to the cytoplasm. The enzyme catalyses [protein]-L-isoaspartate + S-adenosyl-L-methionine = [protein]-L-isoaspartate alpha-methyl ester + S-adenosyl-L-homocysteine. Functionally, catalyzes the methyl esterification of L-isoaspartyl residues in peptides and proteins that result from spontaneous decomposition of normal L-aspartyl and L-asparaginyl residues. It plays a role in the repair and/or degradation of damaged proteins. The sequence is that of Protein-L-isoaspartate O-methyltransferase from Korarchaeum cryptofilum (strain OPF8).